Here is a 206-residue protein sequence, read N- to C-terminus: Small ribosomal subunit protein uS4 (206 aa).

Residues 96–156 (GRLDNVVYRM…EKAKKQSRVK (61 aa)) enclose the S4 RNA-binding domain.

This sequence belongs to the universal ribosomal protein uS4 family. Part of the 30S ribosomal subunit. Contacts protein S5. The interaction surface between S4 and S5 is involved in control of translational fidelity.

Functionally, one of the primary rRNA binding proteins, it binds directly to 16S rRNA where it nucleates assembly of the body of the 30S subunit. Its function is as follows. With S5 and S12 plays an important role in translational accuracy. The polypeptide is Small ribosomal subunit protein uS4 (Salmonella typhi).